A 185-amino-acid polypeptide reads, in one-letter code: Dual-action ribosomal maturation protein DarP (185 aa).

The protein belongs to the DarP family.

The protein resides in the cytoplasm. Its function is as follows. Member of a network of 50S ribosomal subunit biogenesis factors which assembles along the 30S-50S interface, preventing incorrect 23S rRNA structures from forming. Promotes peptidyl transferase center (PTC) maturation. This is Dual-action ribosomal maturation protein DarP from Vibrio vulnificus (strain YJ016).